The sequence spans 547 residues: MPDSSLVLVAIAGAAYIFWLVFHRYLVRSPLDNLPSPPSSPFLGNLPDIIHRQSHLWWRHVSNTYGPATKLTAFFGIQMLYTFDPKAMYSILVKDTELYPKKTAAYDDFTLFIGPGLLFAEGAQHRRQRKWLNPVFSVAQLRDVSHVFYGVAYKLEEAIRNRVGAQSQNLDVNGWMARTTLEMLGQAGLGYSFDKFTEDSTDSYGEALKSFFPVINHVPLLNLFVMTLANHIPKWLMRRVLRLAVPFPHVLRLLRISETMQKRSSEIIQQKKTALQKGDKALIHQVGEGKDIMSVLLKSNMNAPSDSEKLPDEELLAQMSTFILAGMDTTSNALSRILHLLAEHPDVQEKLRHELSEAREIVGNGKDVPYDDLVKLPYLDAVCRETLRLHPPLNLIGRRAAKDMVVPLSSPVRGRDGTLVNEVTLPKDTFVLLGLQACNTNKKLWGEDAYEWKPERWLQPLPSMLEEARVPGVYSNLMSFSGGVRSCIGFKFSQLEMKVLLTILLPAFSFELTEKPIFWNTSAVSYPTMDKDSTRPEMLLKVKALAC.

The chain crosses the membrane as a helical span at residues 2-22 (PDSSLVLVAIAGAAYIFWLVF). Residue C487 participates in heme binding.

This sequence belongs to the cytochrome P450 family. Heme serves as cofactor.

The protein localises to the membrane. It carries out the reaction lanosterol + reduced [NADPH--hemoprotein reductase] + O2 = 26-hydroxylanosterol + oxidized [NADPH--hemoprotein reductase] + H2O + H(+). It catalyses the reaction 26-hydroxylanosterol + reduced [NADPH--hemoprotein reductase] + O2 = 26-oxolanosterol + oxidized [NADPH--hemoprotein reductase] + 2 H2O + H(+). The catalysed reaction is 26-oxolanosterol + reduced [NADPH--hemoprotein reductase] + O2 = 3beta-hydroxy-lanosta-8, 24-dien-26-oate + oxidized [NADPH--hemoprotein reductase] + H2O + 2 H(+). It functions in the pathway secondary metabolite biosynthesis; terpenoid biosynthesis. Its function is as follows. Cytochrome P450 monooxygenase that is involved in the biosynthesis of ganoderic acids (GA), a group of highly oxygenated lanostane-type triterpenoids which well recognized as a main group of unique bioactive compounds in the medicinal mushroom Ganoderma lucidum. CYP5150L8 alone is able to catalyze the three-step oxidations at C-26 from lanosterol to 3-hydroxy-lanosta-8,24-dien-26-oic acid (also called ganoderic acid Z or HLDOA). The methyl group of lanosterol at C-26 is first oxidized into hydroxyl group to form 3-hydroxy-lanosta-8,24-dien-26-ol (HLDO). The hydroxyl group at C-26 of HLDO is further converted into a formyl group to form 3-hydroxy-lanosta-8,24-dien-26-al (HLDA). Finally, the formyl group is oxidized into a carboxyl group to produce 3-hydroxy-lanosta-8,24-dien-26-oic acid (HLDOA). The polypeptide is Ganoderic acid synthetase CYP5150L8 (Ganoderma lucidum (Ling zhi medicinal fungus)).